The sequence spans 142 residues: Large ribosomal subunit protein uL13 (142 aa).

It belongs to the universal ribosomal protein uL13 family. As to quaternary structure, part of the 50S ribosomal subunit.

In terms of biological role, this protein is one of the early assembly proteins of the 50S ribosomal subunit, although it is not seen to bind rRNA by itself. It is important during the early stages of 50S assembly. The protein is Large ribosomal subunit protein uL13 of Wigglesworthia glossinidia brevipalpis.